Reading from the N-terminus, the 309-residue chain is Taste receptor type 2 member 113 (309 aa).

The Extracellular segment spans residues Met-1–Thr-8. A helical membrane pass occupies residues Phe-9–Leu-29. The Cytoplasmic segment spans residues Met-30 to Arg-55. Residues Ile-56 to His-76 form a helical membrane-spanning segment. Residues Glu-77–Ala-101 lie on the Extracellular side of the membrane. A helical transmembrane segment spans residues Ser-102–Leu-122. At Lys-123–Lys-127 the chain is on the cytoplasmic side. Residues Asn-128–Val-148 form a helical membrane-spanning segment. Residues Asn-149–Met-185 are Extracellular-facing. N-linked (GlcNAc...) asparagine glycosylation is present at Asn-162. A helical membrane pass occupies residues Phe-186 to Trp-206. Residues Arg-207 to Arg-229 lie on the Cytoplasmic side of the membrane. Residues Ala-230 to Val-250 form a helical membrane-spanning segment. Over Lys-251–Leu-262 the chain is Extracellular. A helical transmembrane segment spans residues Ile-263–Ile-283. Topologically, residues Trp-284–Val-309 are cytoplasmic.

This sequence belongs to the G-protein coupled receptor T2R family.

The protein resides in the membrane. In terms of biological role, putative taste receptor which may play a role in the perception of bitterness. The polypeptide is Taste receptor type 2 member 113 (Rattus norvegicus (Rat)).